A 323-amino-acid chain; its full sequence is Sphingolipid delta(4)-desaturase DES1 (323 aa).

Helical transmembrane passes span 41–61 (HNLIWIVSLMVLTQLVAFYLV) and 68–88 (WLLFWTYVVGSCISHSMTLAI). Residues 89 to 93 (HEISH) carry the Histidine box-1 motif. Residues 104–124 (WNRCFGMFANLPLGLPYSVSF) form a helical membrane-spanning segment. Residues 128–132 (HMDHH) carry the Histidine box-2 motif. Helical transmembrane passes span 152 to 172 (FFCTPLRKLVWIILQPLFYTI), 185 to 205 (LEIINLVVQFSFDALIYYTLG), and 210 to 230 (FYMLVGSILGLGLHPISGHFI). The Histidine box-3 motif lies at 259–263 (HNEHH).

The protein belongs to the fatty acid desaturase type 1 family. DEGS subfamily. As to quaternary structure, interacts with RLBP1; the interaction increases synthesis of chromophore-precursors by DEGS1.

The protein localises to the endoplasmic reticulum membrane. The catalysed reaction is an N-acylsphinganine + 2 Fe(II)-[cytochrome b5] + O2 + 2 H(+) = an N-acylsphing-4-enine + 2 Fe(III)-[cytochrome b5] + 2 H2O. It catalyses the reaction all-trans-retinol = 11-cis-retinol. The enzyme catalyses all-trans-retinol = 9-cis-retinol. It carries out the reaction all-trans-retinol = 13-cis-retinol. The catalysed reaction is 11-cis-retinol = 13-cis-retinol. It catalyses the reaction 11-cis-retinol = 9-cis-retinol. Its function is as follows. Has sphingolipid-delta-4-desaturase activity. Converts D-erythro-sphinganine to D-erythro-sphingosine (E-sphing-4-enine). Catalyzes the equilibrium isomerization of retinols. The polypeptide is Sphingolipid delta(4)-desaturase DES1 (degs1) (Xenopus tropicalis (Western clawed frog)).